A 1098-amino-acid chain; its full sequence is Early transcription factor large subunit homolog (1098 aa).

Residues 17-317 (KGGRAFFPCD…PNGQPLQRQQ (301 aa)) form the Helicase ATP-binding domain. Residue 64–71 (WQTGTGKS) coordinates ATP. Residues 246-249 (DEIH) carry the DEAH box motif. Positions 489–689 (MMKDILSIIR…EGDKALRKHA (201 aa)) constitute a Helicase C-terminal domain.

It belongs to the DEAD box helicase family. DEAH subfamily.

The protein resides in the virion. The enzyme catalyses ATP + H2O = ADP + phosphate + H(+). Functionally, putative initation factor. The polypeptide is Early transcription factor large subunit homolog (African swine fever virus (isolate Tick/Malawi/Lil 20-1/1983) (ASFV)).